Reading from the N-terminus, the 210-residue chain is Somatotropin-2 (210 aa).

The first 22 residues, 1–22 (MGQVFLLMPVLLVSCFLSQGAA), serve as a signal peptide directing secretion. His-38 serves as a coordination point for Zn(2+). Cys-71 and Cys-183 are joined by a disulfide. Glu-192 contributes to the Zn(2+) binding site. Cys-200 and Cys-208 are joined by a disulfide.

Belongs to the somatotropin/prolactin family.

It is found in the secreted. In terms of biological role, growth hormone plays an important role in growth control and is involved in the regulation of several anabolic processes. Implicated as an osmoregulatory substance important for seawater adaptation. This chain is Somatotropin-2 (gh2), found in Oncorhynchus nerka (Sockeye salmon).